The chain runs to 397 residues: Putative gustatory receptor 93c (397 aa).

Residues 1–12 (MIERLKKVSLPA) are Cytoplasmic-facing. Residues 13 to 33 (LSAFILFCSCHYGRILGVICF) traverse the membrane as a helical segment. The Extracellular segment spans residues 34 to 87 (DIGQRTSDDSLVVRNRHQFKWFCLSCRLISVTAVCCFCAPYVADIEDPYERLLQ). The helical transmembrane segment at 88-108 (CFRLSASLICGICIIVVQVCY) threads the bilayer. The Cytoplasmic segment spans residues 109–141 (EKELLRMIISFLRLFRRVRRLSSLKRIGFGGKR). The helical transmembrane segment at 142–162 (EFFLLLFKFICLVYELYSEIC) threads the bilayer. At 163 to 179 (QLWHLPDSLSLFATLCE) the chain is on the extracellular side. The helical transmembrane segment at 180–200 (IFLEIGSLMIIHIGFVGYLSV) threads the bilayer. The Cytoplasmic portion of the chain corresponds to 201–266 (AALYSEVNSF…RTFHRLLELP (66 aa)). A helical membrane pass occupies residues 267–287 (VLIILLGKIFATTILSYEVII). The Extracellular portion of the chain corresponds to 288 to 295 (RPELYARK). The chain crosses the membrane as a helical span at residues 296–316 (IGMWGLVVKSFADVILLTLAV). Residues 317 to 371 (HEAVSSSRMMRRLSLENFPITDHKAWHMKWEMFLSRLNFFEFRVRPLGLFEVSNE) are Cytoplasmic-facing. A helical membrane pass occupies residues 372-392 (VILLFLSSMITYFTYVVQYGI). Topologically, residues 393 to 397 (QTNRL) are extracellular.

This sequence belongs to the insect chemoreceptor superfamily. Gustatory receptor (GR) family. Gr93a subfamily. In terms of tissue distribution, in larvae, is expressed in neurons of the posterior pharyngeal sense organ.

The protein localises to the cell membrane. In terms of biological role, probable gustatory receptor which mediates acceptance or avoidance behavior, depending on its substrates. This Drosophila melanogaster (Fruit fly) protein is Putative gustatory receptor 93c (Gr93c).